The following is a 320-amino-acid chain: o-succinylbenzoate synthase (320 aa).

Lys-133 functions as the Proton donor in the catalytic mechanism. Residues Asp-161, Glu-190, and Asp-213 each coordinate Mg(2+). The active-site Proton acceptor is the Lys-235.

The protein belongs to the mandelate racemase/muconate lactonizing enzyme family. MenC type 1 subfamily. The cofactor is a divalent metal cation.

The catalysed reaction is (1R,6R)-6-hydroxy-2-succinyl-cyclohexa-2,4-diene-1-carboxylate = 2-succinylbenzoate + H2O. Its pathway is quinol/quinone metabolism; 1,4-dihydroxy-2-naphthoate biosynthesis; 1,4-dihydroxy-2-naphthoate from chorismate: step 4/7. It functions in the pathway quinol/quinone metabolism; menaquinone biosynthesis. Converts 2-succinyl-6-hydroxy-2,4-cyclohexadiene-1-carboxylate (SHCHC) to 2-succinylbenzoate (OSB). The sequence is that of o-succinylbenzoate synthase from Escherichia coli O139:H28 (strain E24377A / ETEC).